The primary structure comprises 868 residues: Rifampicin phosphotransferase (868 aa).

An ATP-binding region spans residues methionine 1–threonine 313. Residues lysine 22, arginine 116, glycine 131, threonine 135, glutamine 182, glutamate 296, glutamine 308, and arginine 310 each coordinate ATP. Residues asparagine 326–lysine 756 form a rifampicin-binding region. Residues glycine 769 to valine 867 form a swivel phosphohistidine region. Histidine 827 serves as the catalytic Tele-phosphohistidine intermediate.

This sequence belongs to the rifampicin phosphotransferase family.

It carries out the reaction rifampicin + ATP + H2O = 21-phosphorifampicin + AMP + phosphate + 2 H(+). Catalyzes the phosphorylation of rifampicin, also known as rifampin (RIF), leading to its inactivation. Confers high level resistance to a variety of clinically used rifamycin antibiotics. Does not show phosphoenolpyruvate (PEP) synthase activity. This chain is Rifampicin phosphotransferase, found in Bacillus cereus (strain ATCC 14579 / DSM 31 / CCUG 7414 / JCM 2152 / NBRC 15305 / NCIMB 9373 / NCTC 2599 / NRRL B-3711).